Reading from the N-terminus, the 353-residue chain is tRNA N6-adenosine threonylcarbamoyltransferase (353 aa).

Fe cation contacts are provided by His115 and His119. Substrate contacts are provided by residues 138 to 142 (LVSGG), Asp171, Gly184, and Asn276. Asp304 contributes to the Fe cation binding site.

Belongs to the KAE1 / TsaD family. Fe(2+) is required as a cofactor.

It is found in the cytoplasm. It catalyses the reaction L-threonylcarbamoyladenylate + adenosine(37) in tRNA = N(6)-L-threonylcarbamoyladenosine(37) in tRNA + AMP + H(+). Its function is as follows. Required for the formation of a threonylcarbamoyl group on adenosine at position 37 (t(6)A37) in tRNAs that read codons beginning with adenine. Is involved in the transfer of the threonylcarbamoyl moiety of threonylcarbamoyl-AMP (TC-AMP) to the N6 group of A37, together with TsaE and TsaB. TsaD likely plays a direct catalytic role in this reaction. The chain is tRNA N6-adenosine threonylcarbamoyltransferase from Xanthomonas euvesicatoria pv. vesicatoria (strain 85-10) (Xanthomonas campestris pv. vesicatoria).